The primary structure comprises 259 residues: Probable ABC transporter permease protein RBE_1340 (259 aa).

The next 5 helical transmembrane spans lie at 25–45 (IFSL…SLII), 49–69 (LFIG…SGAV), 148–168 (VIAA…IGVM), 195–215 (PIDV…ISII), and 237–257 (AVVN…ELFF).

Belongs to the MlaE permease family.

It is found in the cell inner membrane. Functionally, could be part of an ABC transporter complex. This is Probable ABC transporter permease protein RBE_1340 from Rickettsia bellii (strain RML369-C).